Consider the following 615-residue polypeptide: Glutamine--fructose-6-phosphate aminotransferase [isomerizing] (615 aa).

The Nucleophile; for GATase activity role is filled by cysteine 2. The Glutamine amidotransferase type-2 domain maps to 2–220 (CGIVGYVGPQ…QDQVVELRRD (219 aa)). 2 SIS domains span residues 287 to 427 (IPPG…VRGT) and 460 to 605 (LARS…VDQP). Lysine 610 serves as the catalytic For Fru-6P isomerization activity.

As to quaternary structure, homodimer.

It localises to the cytoplasm. The catalysed reaction is D-fructose 6-phosphate + L-glutamine = D-glucosamine 6-phosphate + L-glutamate. Catalyzes the first step in hexosamine metabolism, converting fructose-6P into glucosamine-6P using glutamine as a nitrogen source. The protein is Glutamine--fructose-6-phosphate aminotransferase [isomerizing] of Streptomyces coelicolor (strain ATCC BAA-471 / A3(2) / M145).